Consider the following 670-residue polypeptide: DNA ligase (670 aa).

Residues 32–36 (DAEYD), 81–82 (SL), and E113 each bind NAD(+). Catalysis depends on K115, which acts as the N6-AMP-lysine intermediate. Residues R136, E173, K290, and K314 each contribute to the NAD(+) site. The Zn(2+) site is built by C408, C411, C426, and C432. Positions 592–670 (ESDSPFAGKT…EAEMIRLLGE (79 aa)) constitute a BRCT domain.

The protein belongs to the NAD-dependent DNA ligase family. LigA subfamily. Mg(2+) serves as cofactor. Requires Mn(2+) as cofactor.

It carries out the reaction NAD(+) + (deoxyribonucleotide)n-3'-hydroxyl + 5'-phospho-(deoxyribonucleotide)m = (deoxyribonucleotide)n+m + AMP + beta-nicotinamide D-nucleotide.. In terms of biological role, DNA ligase that catalyzes the formation of phosphodiester linkages between 5'-phosphoryl and 3'-hydroxyl groups in double-stranded DNA using NAD as a coenzyme and as the energy source for the reaction. It is essential for DNA replication and repair of damaged DNA. This is DNA ligase from Yersinia pestis bv. Antiqua (strain Antiqua).